The sequence spans 258 residues: Putative [LysW]-aminoadipate/[LysW]-glutamate kinase (258 aa).

Substrate-binding positions include 33 to 34 (GG), arginine 60, and asparagine 164.

This sequence belongs to the acetylglutamate kinase family. LysZ subfamily.

The protein resides in the cytoplasm. It catalyses the reaction [amino-group carrier protein]-C-terminal-N-(1,4-dicarboxybutan-1-yl)-L-glutamine + ATP = [amino-group carrier protein]-C-terminal-N-(1-carboxy-5-phosphooxy-5-oxopentan-1-yl)-L-glutamine + ADP. The enzyme catalyses [amino-group carrier protein]-C-terminal-gamma-(L-glutamyl)-L-glutamate + ATP = [amino-group carrier protein]-C-terminal-gamma-(5-phospho-L-glutamyl)-L-glutamate + ADP. The protein operates within amino-acid biosynthesis; L-lysine biosynthesis via AAA pathway; L-lysine from L-alpha-aminoadipate (Thermus route): step 2/5. Its pathway is amino-acid biosynthesis; L-arginine biosynthesis. Its function is as follows. Involved in both the arginine and lysine biosynthetic pathways. Phosphorylates the LysW-bound precursors glutamate (for arginine biosynthesis), respectively alpha-aminoadipate (for lysine biosynthesis). This chain is Putative [LysW]-aminoadipate/[LysW]-glutamate kinase, found in Caldivirga maquilingensis (strain ATCC 700844 / DSM 13496 / JCM 10307 / IC-167).